The primary structure comprises 343 residues: Cytoplasmic tRNA 2-thiolation protein 1 (343 aa).

Belongs to the TtcA family. CTU1/NCS6/ATPBD3 subfamily.

The protein resides in the cytoplasm. It participates in tRNA modification; 5-methoxycarbonylmethyl-2-thiouridine-tRNA biosynthesis. In terms of biological role, plays a central role in 2-thiolation of mcm(5)S(2)U at tRNA wobble positions of tRNA(Lys), tRNA(Glu) and tRNA(Gln). Directly binds tRNAs and probably acts by catalyzing adenylation of tRNAs, an intermediate required for 2-thiolation. It is unclear whether it acts as a sulfurtransferase that transfers sulfur from thiocarboxylated URM1 onto the uridine of tRNAs at wobble position. This is Cytoplasmic tRNA 2-thiolation protein 1 from Drosophila yakuba (Fruit fly).